Consider the following 557-residue polypeptide: Urocanate hydratase (557 aa).

Residues Met1–Asn20 are disordered. NAD(+) contacts are provided by residues Gly52–Gly53, Gln130, Gly176–Gly178, Glu196, Arg201, Asn242–Ala243, Gln263–His267, Tyr273–Leu274, and Tyr322. Residue Cys410 is part of the active site. Gly492 is a binding site for NAD(+).

The protein belongs to the urocanase family. NAD(+) is required as a cofactor.

The protein localises to the cytoplasm. It carries out the reaction 4-imidazolone-5-propanoate = trans-urocanate + H2O. It participates in amino-acid degradation; L-histidine degradation into L-glutamate; N-formimidoyl-L-glutamate from L-histidine: step 2/3. Functionally, catalyzes the conversion of urocanate to 4-imidazolone-5-propionate. The sequence is that of Urocanate hydratase from Brucella suis (strain ATCC 23445 / NCTC 10510).